A 338-amino-acid chain; its full sequence is Ketol-acid reductoisomerase (NADP(+)) (338 aa).

Residues 1 to 181 (MKVFYDKDAD…GGGRAGIIET (181 aa)) form the KARI N-terminal Rossmann domain. NADP(+) contacts are provided by residues 24–27 (YGSQ), Arg47, and Ser52. The active site involves His107. Gly133 serves as a coordination point for NADP(+). The 146-residue stretch at 182–327 (NFREETETDL…GKLRAMMPWI (146 aa)) folds into the KARI C-terminal knotted domain. Asp190, Glu194, Glu226, and Glu230 together coordinate Mg(2+). Ser251 lines the substrate pocket.

The protein belongs to the ketol-acid reductoisomerase family. Mg(2+) is required as a cofactor.

The enzyme catalyses (2R)-2,3-dihydroxy-3-methylbutanoate + NADP(+) = (2S)-2-acetolactate + NADPH + H(+). It catalyses the reaction (2R,3R)-2,3-dihydroxy-3-methylpentanoate + NADP(+) = (S)-2-ethyl-2-hydroxy-3-oxobutanoate + NADPH + H(+). Its pathway is amino-acid biosynthesis; L-isoleucine biosynthesis; L-isoleucine from 2-oxobutanoate: step 2/4. It functions in the pathway amino-acid biosynthesis; L-valine biosynthesis; L-valine from pyruvate: step 2/4. Functionally, involved in the biosynthesis of branched-chain amino acids (BCAA). Catalyzes an alkyl-migration followed by a ketol-acid reduction of (S)-2-acetolactate (S2AL) to yield (R)-2,3-dihydroxy-isovalerate. In the isomerase reaction, S2AL is rearranged via a Mg-dependent methyl migration to produce 3-hydroxy-3-methyl-2-ketobutyrate (HMKB). In the reductase reaction, this 2-ketoacid undergoes a metal-dependent reduction by NADPH to yield (R)-2,3-dihydroxy-isovalerate. The chain is Ketol-acid reductoisomerase (NADP(+)) from Cupriavidus metallidurans (strain ATCC 43123 / DSM 2839 / NBRC 102507 / CH34) (Ralstonia metallidurans).